The sequence spans 777 residues: 5-methyltetrahydropteroyltriglutamate--homocysteine methyltransferase (777 aa).

Residues 17 to 20 (RELK) and lysine 132 contribute to the 5-methyltetrahydropteroyltri-L-glutamate site. L-homocysteine is bound by residues 455–457 (IGS) and glutamate 508. L-methionine contacts are provided by residues 455 to 457 (IGS) and glutamate 508. Residues 539–540 (RC) and tryptophan 585 each bind 5-methyltetrahydropteroyltri-L-glutamate. Aspartate 623 contacts L-homocysteine. Aspartate 623 serves as a coordination point for L-methionine. Residue glutamate 629 participates in 5-methyltetrahydropteroyltri-L-glutamate binding. Histidine 665, cysteine 667, and glutamate 689 together coordinate Zn(2+). Histidine 718 serves as the catalytic Proton donor. Cysteine 750 serves as a coordination point for Zn(2+).

Belongs to the vitamin-B12 independent methionine synthase family. Zn(2+) serves as cofactor.

The catalysed reaction is 5-methyltetrahydropteroyltri-L-glutamate + L-homocysteine = tetrahydropteroyltri-L-glutamate + L-methionine. Its pathway is amino-acid biosynthesis; L-methionine biosynthesis via de novo pathway; L-methionine from L-homocysteine (MetE route): step 1/1. Functionally, catalyzes the transfer of a methyl group from 5-methyltetrahydrofolate to homocysteine resulting in methionine formation. The sequence is that of 5-methyltetrahydropteroyltriglutamate--homocysteine methyltransferase from Caulobacter vibrioides (strain ATCC 19089 / CIP 103742 / CB 15) (Caulobacter crescentus).